The chain runs to 76 residues: Large ribosomal subunit protein uL29 (76 aa).

It belongs to the universal ribosomal protein uL29 family.

In Corynebacterium diphtheriae (strain ATCC 700971 / NCTC 13129 / Biotype gravis), this protein is Large ribosomal subunit protein uL29.